A 320-amino-acid chain; its full sequence is MIFITLEHILAHISFSLILVVTLIYWGTLVYRIEGLSSSGGKGMIVTFLCTTGLLINRWLYSGHLPLSNLYESFMFLSWSSSVFHILLEVRSRDDRWLGAITAPSAMLTHGFATLGLPEEMQRSGMLVPALQSHWSMMHVSMILFSYATLLCGSLASIALLVIMSGVNRQVIFGAMDNLFSRAILPNENFYSHEKQKSDLQYTVYFSSTNYRKCQLIKQLDHWSYRAIGLGFSLSTIGTLSGAIWANEAWGSYWSWDPKETWALITWTIFAIYLHTRMNKGWQGEEPAIVASLGFFIVWIRYLGVNLLGIGLHSYGWLEP.

Transmembrane regions (helical) follow at residues 9 to 29 (ILAH…WGTL), 36 to 56 (LSSS…GLLI), 70 to 90 (LYES…LLEV), 97 to 117 (WLGA…TLGL), 143 to 163 (ILFS…LLVI), 227 to 247 (AIGL…IWAN), 254 to 274 (WSWD…AIYL), and 288 to 308 (AIVA…VNLL).

Belongs to the CcmF/CycK/Ccl1/NrfE/CcsA family. As to quaternary structure, may interact with Ccs1.

The protein resides in the plastid. The protein localises to the chloroplast thylakoid membrane. In terms of biological role, required during biogenesis of c-type cytochromes (cytochrome c6 and cytochrome f) at the step of heme attachment. This Pinus thunbergii (Japanese black pine) protein is Cytochrome c biogenesis protein CcsA.